A 336-amino-acid chain; its full sequence is F420-dependent glucose-6-phosphate dehydrogenase (336 aa).

D40 serves as a coordination point for coenzyme F420-(gamma-Glu)n. H41 (proton donor) is an active-site residue. Residues T77 and 108-109 (TG) contribute to the coenzyme F420-(gamma-Glu)n site. E110 acts as the Proton acceptor in catalysis. Residues N113, 176–177 (SG), and 179–180 (AA) contribute to the coenzyme F420-(gamma-Glu)n site. Substrate contacts are provided by T194, K197, K258, and R282.

The protein belongs to the F420-dependent glucose-6-phosphate dehydrogenase family. In terms of assembly, homodimer.

The enzyme catalyses oxidized coenzyme F420-(gamma-L-Glu)(n) + D-glucose 6-phosphate + H(+) = 6-phospho-D-glucono-1,5-lactone + reduced coenzyme F420-(gamma-L-Glu)(n). Catalyzes the coenzyme F420-dependent oxidation of glucose 6-phosphate (G6P) to 6-phosphogluconolactone. In Microbacterium testaceum (strain StLB037), this protein is F420-dependent glucose-6-phosphate dehydrogenase.